Reading from the N-terminus, the 324-residue chain is Probable RuBisCO transcriptional regulator (324 aa).

Positions 8–65 (FSLEQLRILKAIATEGSFKKAAESLYMTQPAISLQIQTLEKKLNIALFDRSGRRALMT) constitute an HTH lysR-type domain. A DNA-binding region (H-T-H motif) is located at residues 25-44 (FKKAAESLYMTQPAISLQIQ).

Belongs to the LysR transcriptional regulatory family.

The protein localises to the plastid. It localises to the cyanelle. Trans-acting transcriptional regulator of RuBisCO genes (rbcL and rbcS) expression. The chain is Probable RuBisCO transcriptional regulator (rbcR) from Cyanophora paradoxa.